Here is a 434-residue protein sequence, read N- to C-terminus: MSQHASSSSWTSFLKSISSFNGDLSSLSAPPFILSPTSLTEFSQYWAEHPALFLEPSLIDGENYKDHCPFDPNVESKEVAQMLAVVRWFISTLRSQYCSRSESMGSEKKPLNPFLGEVFVGKWKNDEHPEFGETVLLSEQVSHHPPMTAFSIFNEKNDVSVQGYNQIKTGFTKTLTLTVKPYGHVILKIKDETYLITTPPLHIEGILVASPFVELGGRSFIQSSNGMLCVIEFSGRGYFTGKKNSFKARIYRSPQEHSHKENALYLISGQWSGVSTIIKKDSQVSHQFYDSSETPTEHLLVKPIEEQHPLESRRAWKDVAEAIRQGNISMIKKTKEELENKQRALREQERVKGVEWQRRWFKQVDYMNENTSNDVEKASEDDAFRKLASKLQLSVKNVPSGTLIGGKDDKKDVSTALHWRFDKNLWMRENEITI.

The OSBP-related domain (ORD) stretch occupies residues 18 to 371; that stretch reads SSFNGDLSSL…KQVDYMNENT (354 aa). An a 1,2-diacyl-sn-glycero-3-phospho-(1D-myo-inositol 4-phosphate)-binding site is contributed by 24–29; that stretch reads LSSLSA. Residue glutamine 96 participates in 20-hydroxycholesterol binding. 25-hydroxycholesterol is bound at residue glutamine 96. 2 residues coordinate 7beta-hydroxycholesterol: glutamine 96 and arginine 100. Glutamine 96 contacts cholesterol. Residue glutamine 96 participates in ergosterol binding. Residues 109–112, 143–144, lysine 335, glutamate 339, and arginine 343 contribute to the a 1,2-diacyl-sn-glycero-3-phospho-(1D-myo-inositol 4-phosphate) site; these read KPLN and HH. Serine 389 bears the Phosphoserine mark.

Belongs to the OSBP family.

The protein resides in the vacuole membrane. It is found in the bud neck. In terms of biological role, lipid transport protein (LTP) involved in non-vesicular transfer of lipids between membranes. Functions in phosphoinositide-coupled directional transport of various lipids by carrying the lipid molecule in a hydrophobic pocket and transferring it between membranes through the cytosol. Involved in maintenance of intracellular sterol distribution and homeostasis. Plays a role in ergosterol synthesis. Binds and transports sterol. May be involved in ergosterol transport from the plasma membrane (PM) to the ER. In Saccharomyces cerevisiae (strain ATCC 204508 / S288c) (Baker's yeast), this protein is Oxysterol-binding protein homolog 5.